Here is a 460-residue protein sequence, read N- to C-terminus: UDP-glucuronate 4-epimerase 6 (460 aa).

2 helical membrane passes run alanine 41 to serine 61 and glycine 111 to leucine 131. Serine 113–phenylalanine 144 is an NAD(+) binding site. Tyrosine 263 acts as the Proton acceptor in catalysis.

It belongs to the NAD(P)-dependent epimerase/dehydratase family. Homodimer. As to expression, in roots, leaf veins, siliques, flowers, pollen and stems.

The protein localises to the golgi apparatus. It localises to the golgi stack membrane. It catalyses the reaction UDP-alpha-D-glucuronate = UDP-alpha-D-galacturonate. Involved in the synthesis of the negatively charged monosaccharide that forms the backbone of pectic cell wall components. The protein is UDP-glucuronate 4-epimerase 6 (GAE6) of Arabidopsis thaliana (Mouse-ear cress).